The following is a 350-amino-acid chain: Ion-translocating oxidoreductase complex subunit D (350 aa).

5 helical membrane passes run 15-35 (QTQT…LAQT), 36-56 (WFFG…ALGA), 67-87 (PIKP…IGLS), 88-108 (LPPL…IIIA), and 122-142 (PAMV…TSWL). FMN phosphoryl threonine is present on threonine 186. 4 helical membrane-spanning segments follow: residues 213–233 (WGGI…LFLL), 242–262 (IPGA…LMTP), 264–284 (ATAT…AFFI), and 299–316 (LVYG…RRFG).

This sequence belongs to the NqrB/RnfD family. In terms of assembly, the complex is composed of six subunits: RnfA, RnfB, RnfC, RnfD, RnfE and RnfG. The cofactor is FMN.

The protein localises to the cell inner membrane. Its function is as follows. Part of a membrane-bound complex that couples electron transfer with translocation of ions across the membrane. This chain is Ion-translocating oxidoreductase complex subunit D, found in Aeromonas salmonicida (strain A449).